Reading from the N-terminus, the 303-residue chain is Glycosyltransferase AglJ (303 aa).

Transmembrane regions (helical) follow at residues 230 to 250 (FYFG…ALYV) and 263 to 283 (VIAV…MFGV).

This sequence belongs to the glycosyltransferase 2 family.

The protein resides in the cell membrane. It functions in the pathway cell surface structure biogenesis; S-layer biogenesis. Involved in the assembly of a N-linked pentasaccharide that decorates the S-layer glycoprotein and flagellins. Adds the first hexose subunit of the pentasaccharide to the dolichol phosphate carrier. This chain is Glycosyltransferase AglJ (aglJ), found in Haloferax volcanii (strain ATCC 29605 / DSM 3757 / JCM 8879 / NBRC 14742 / NCIMB 2012 / VKM B-1768 / DS2) (Halobacterium volcanii).